The sequence spans 144 residues: MAFNFTAFTYIVALIGDAFLIFFAIFHVIAFDELKTDYKNPIDQCNSLNPLVLPEYLLHIFLNLLFLFCGEWFSLCINIPLIAYHIWRYKNRPVMSGPGLYDPTTVLKTDTLYRNMREGWIKLAVYLISFFYYIYGMVYSLIST.

Residues 1–10 are Lumenal-facing; the sequence is MAFNFTAFTY. The interaction with grk stretch occupies residues 1-57; the sequence is MAFNFTAFTYIVALIGDAFLIFFAIFHVIAFDELKTDYKNPIDQCNSLNPLVLPEYL. A helical transmembrane segment spans residues 11–31; it reads IVALIGDAFLIFFAIFHVIAF. At 32-56 the chain is on the cytoplasmic side; that stretch reads DELKTDYKNPIDQCNSLNPLVLPEY. Residues 57 to 77 form a helical membrane-spanning segment; that stretch reads LLHIFLNLLFLFCGEWFSLCI. The Lumenal segment spans residues 78 to 122; it reads NIPLIAYHIWRYKNRPVMSGPGLYDPTTVLKTDTLYRNMREGWIK. Residues 123 to 143 traverse the membrane as a helical segment; sequence LAVYLISFFYYIYGMVYSLIS. Thr-144 is a topological domain (cytoplasmic).

This sequence belongs to the cornichon family. In terms of assembly, interacts with grk. As to expression, expressed in male and female somatic tissues.

The protein resides in the endoplasmic reticulum membrane. In terms of biological role, acts as a cargo receptor necessary for the transportation of gurken (grk) to a transitional endoplasmic reticulum (tER) site and promotes its incorporation into coat protein complex II (COPII) vesicles. Associated with gurken, produces a signal received by torpedo resulting in a signaling pathway that first establishes posterior follicle cell fates and normal localization of the anterior and posterior determinants, later they act in a signaling event inducing dorsal follicle cell fates and regulating the dorsal-ventral pattern of egg and embryo. The sequence is that of Protein cornichon (cni) from Drosophila melanogaster (Fruit fly).